Here is a 192-residue protein sequence, read N- to C-terminus: Archaemetzincin (192 aa).

H137 is a binding site for Zn(2+). E138 serves as the catalytic Proton acceptor. Zn(2+) contacts are provided by H141, H147, C148, C153, C172, and C175.

The protein belongs to the peptidase M54 family. As to quaternary structure, monomer. Zn(2+) serves as cofactor.

Probable zinc metalloprotease whose natural substrate is unknown. In Pyrococcus furiosus (strain ATCC 43587 / DSM 3638 / JCM 8422 / Vc1), this protein is Archaemetzincin.